The primary structure comprises 130 residues: Histone H2A.2 (130 aa).

Residues Lys-4 and Lys-6 each carry the N6-acetyllysine modification. Gln-104 is subject to N5-methylglutamine. A Glycyl lysine isopeptide (Lys-Gly) (interchain with G-Cter in SUMO) cross-link involves residue Lys-125. A Phosphoserine modification is found at Ser-127. The [ST]-Q motif signature appears at 127-128; the sequence is SQ.

The protein belongs to the histone H2A family. The nucleosome is a histone octamer containing two molecules each of H2A, H2B, H3 and H4 assembled in one H3-H4 heterotetramer and two H2A-H2B heterodimers. The octamer wraps approximately 147 bp of DNA. Post-translationally, phosphorylated to form H2AS128ph (gamma-H2A) in response to DNA double-strand breaks (DSBs) generated by exogenous genotoxic agents and by stalled replication forks. Phosphorylation is dependent on the DNA damage checkpoint kinases MEC1/ATR and TEL1/ATM, spreads on either side of a detected DSB site and may mark the surrounding chromatin for recruitment of proteins required for DNA damage signaling and repair. Gamma-H2A is removed from the DNA prior to the strand invasion-primer extension step of the repair process and subsequently dephosphorylated. Dephosphorylation is necessary for efficient recovery from the DNA damage checkpoint. In terms of processing, acetylated by ESA1 to form H2AK4ac and H2AK7ac.

Its subcellular location is the nucleus. It localises to the chromosome. Core component of nucleosome which plays a central role in DNA double strand break (DSB) repair. Nucleosomes wrap and compact DNA into chromatin, limiting DNA accessibility to the cellular machineries which require DNA as a template. Histones thereby play a central role in transcription regulation, DNA repair, DNA replication and chromosomal stability. DNA accessibility is regulated via a complex set of post-translational modifications of histones, also called histone code, and nucleosome remodeling. In Meyerozyma guilliermondii (strain ATCC 6260 / CBS 566 / DSM 6381 / JCM 1539 / NBRC 10279 / NRRL Y-324) (Yeast), this protein is Histone H2A.2 (HTA2).